Consider the following 75-residue polypeptide: Alpha-amylase inhibitor Paim-2 (75 aa).

Disulfide bonds link Cys10–Cys26 and Cys44–Cys72.

Its function is as follows. Inhibits mammalian alpha-amylases specifically but has no action on plant and microbial alpha-amylases. This Streptomyces olivaceoviridis (Streptomyces corchorusii) protein is Alpha-amylase inhibitor Paim-2.